Reading from the N-terminus, the 594-residue chain is NADH-ubiquinone oxidoreductase chain 5 (594 aa).

Helical transmembrane passes span 1 to 21 (MNLF…PIMM), 43 to 63 (AFLI…EMII), 87 to 107 (IVFA…SMWY), 114 to 134 (INQF…LVTA), 137 to 157 (LFQL…LIGW), 171 to 191 (AILY…WFLS), 211 to 233 (LPLM…HPWL), 241 to 261 (TPVS…FLLI), 272 to 292 (LMQT…AMCA), 301 to 320 (IIAF…IGIN), 325 to 347 (AFLH…GSII), 366 to 386 (MPFT…VPFL), 409 to 429 (LLIT…IIFF), 457 to 477 (LMAG…PMTT), and 486 to 506 (LKMT…EITL).

The protein belongs to the complex I subunit 5 family. As to quaternary structure, core subunit of respiratory chain NADH dehydrogenase (Complex I) which is composed of 45 different subunits.

The protein localises to the mitochondrion inner membrane. The enzyme catalyses a ubiquinone + NADH + 5 H(+)(in) = a ubiquinol + NAD(+) + 4 H(+)(out). Core subunit of the mitochondrial membrane respiratory chain NADH dehydrogenase (Complex I) which catalyzes electron transfer from NADH through the respiratory chain, using ubiquinone as an electron acceptor. Essential for the catalytic activity and assembly of complex I. The protein is NADH-ubiquinone oxidoreductase chain 5 (MT-ND5) of Hippopotamus amphibius (Hippopotamus).